Here is a 99-residue protein sequence, read N- to C-terminus: uncharacterized protein (99 aa).

The protein localises to the mitochondrion. This is an uncharacterized protein from Marchantia polymorpha (Common liverwort).